A 238-amino-acid polypeptide reads, in one-letter code: Thrombin-like enzyme halystase (238 aa).

The Peptidase S1 domain maps to 1 to 229 (IIGGDECNIN…HLDWIKSIIA (229 aa)). 6 disulfide bridges follow: Cys7–Cys141, Cys28–Cys44, Cys76–Cys236, Cys120–Cys190, Cys152–Cys169, and Cys180–Cys205. His43 (charge relay system) is an active-site residue. A glycan (N-linked (GlcNAc...) asparagine) is linked at Asn81. Asp88 functions as the Charge relay system in the catalytic mechanism. The N-linked (GlcNAc...) asparagine glycan is linked to Asn100. Catalysis depends on Ser184, which acts as the Charge relay system.

It belongs to the peptidase S1 family. Snake venom subfamily. As to quaternary structure, monomer. As to expression, expressed by the venom gland.

The protein resides in the secreted. Its activity is regulated as follows. Inhibited by diisopropylfluorophosphate (DFP), PMSF and leupeptin. Its function is as follows. Thrombin-like snake venom serine protease. Cleaves fibrinogen (beta chain of fibrinogen (FGB) and more slowly alpha chain (FGA)) without inducing fibrin clotting and cleaves kininogen to produce bradykinin (KNG), resulting in the reduction of blood pressure. The sequence is that of Thrombin-like enzyme halystase from Gloydius blomhoffii (Mamushi).